A 339-amino-acid chain; its full sequence is Undecaprenyl-phosphate 4-deoxy-4-formamido-L-arabinose transferase (339 aa).

2 helical membrane passes run 235-255 (LSIIGFGMAGLGALFALMLIV) and 270-290 (FVLFAVLFVFTGGQFIGMGLL).

The protein belongs to the glycosyltransferase 2 family.

The protein resides in the cell inner membrane. The catalysed reaction is UDP-4-deoxy-4-formamido-beta-L-arabinose + di-trans,octa-cis-undecaprenyl phosphate = 4-deoxy-4-formamido-alpha-L-arabinopyranosyl di-trans,octa-cis-undecaprenyl phosphate + UDP. The protein operates within glycolipid biosynthesis; 4-amino-4-deoxy-alpha-L-arabinose undecaprenyl phosphate biosynthesis; 4-amino-4-deoxy-alpha-L-arabinose undecaprenyl phosphate from UDP-4-deoxy-4-formamido-beta-L-arabinose and undecaprenyl phosphate: step 1/2. It participates in bacterial outer membrane biogenesis; lipopolysaccharide biosynthesis. Functionally, catalyzes the transfer of 4-deoxy-4-formamido-L-arabinose from UDP to undecaprenyl phosphate. The modified arabinose is attached to lipid A and is required for resistance to polymyxin and cationic antimicrobial peptides. This Pseudomonas fluorescens (strain ATCC BAA-477 / NRRL B-23932 / Pf-5) protein is Undecaprenyl-phosphate 4-deoxy-4-formamido-L-arabinose transferase.